The sequence spans 208 residues: Recombination protein RecR (208 aa).

The C4-type zinc-finger motif lies at 57-72 (CALCNTLTEQEVCVTC). The Toprim domain maps to 80-187 (SKLCVVETPA…QVTRLARGVP (108 aa)).

The protein belongs to the RecR family.

Its function is as follows. May play a role in DNA repair. It seems to be involved in an RecBC-independent recombinational process of DNA repair. It may act with RecF and RecO. In Polaromonas naphthalenivorans (strain CJ2), this protein is Recombination protein RecR.